The following is a 272-amino-acid chain: Putative UTP--glucose-1-phosphate uridylyltransferase (272 aa).

It belongs to the UDPGP type 2 family.

It carries out the reaction alpha-D-glucose 1-phosphate + UTP + H(+) = UDP-alpha-D-glucose + diphosphate. This Bacillus subtilis (strain 168) protein is Putative UTP--glucose-1-phosphate uridylyltransferase (ytdA).